A 1334-amino-acid polypeptide reads, in one-letter code: Rho1 guanine nucleotide exchange factor 1 (1334 aa).

4 disordered regions span residues 1 to 89, 135 to 182, 203 to 245, and 381 to 402; these read MDYR…ASPV, PQVS…SDSV, LDQN…TSGT, and SLIN…ASSP. A compositionally biased stretch (low complexity) spans 138–149; the sequence is SNHAPNNSNSPS. The span at 150 to 164 shows a compositional bias: polar residues; the sequence is LTWHTSSGDDSNQNP. Residues 170–180 show a composition bias toward low complexity; that stretch reads QSQSSTSPVSD. Polar residues-rich tracts occupy residues 213 to 227, 234 to 245, and 381 to 400; these read VRSS…NSRL, HTVGSHSFTSGT, and SLIN…SEAS. S381 bears the Phosphoserine mark. Positions 621 to 808 constitute a DH domain; sequence KRQEVICEVI…RGFLSRLNVE (188 aa). In terms of domain architecture, PH spans 843–973; it reads QLIFKGPLKK…WLEHIDNQQT (131 aa). The region spanning 995-1293 is the CNH domain; it reads DNKVNAIGVY…RLLADGRGKL (299 aa).

It is found in the cytoplasm. Its function is as follows. Stimulates the exchange of Rho1 and Rho5 GDP-bound form into GTP-bound form. Controls septum formation, cell wall synthesis and localization of F-actin patches. Coordinates actin deposition with cell wall biosynthesis during bipolar growth. In Schizosaccharomyces pombe (strain 972 / ATCC 24843) (Fission yeast), this protein is Rho1 guanine nucleotide exchange factor 1 (rgf1).